A 398-amino-acid polypeptide reads, in one-letter code: Acetate kinase (398 aa).

Residue Asn-9 coordinates Mg(2+). Lys-16 contributes to the ATP binding site. Arg-93 serves as a coordination point for substrate. Asp-150 functions as the Proton donor/acceptor in the catalytic mechanism. Residues 209 to 213, 284 to 286, and 329 to 333 each bind ATP; these read HLGAG, DMR, and GIGEH. Glu-382 is a binding site for Mg(2+).

Belongs to the acetokinase family. In terms of assembly, homodimer. Mg(2+) serves as cofactor. Mn(2+) is required as a cofactor.

The protein localises to the cytoplasm. The catalysed reaction is acetate + ATP = acetyl phosphate + ADP. Its pathway is metabolic intermediate biosynthesis; acetyl-CoA biosynthesis; acetyl-CoA from acetate: step 1/2. Catalyzes the formation of acetyl phosphate from acetate and ATP. Can also catalyze the reverse reaction. This is Acetate kinase from Rhodopseudomonas palustris (strain ATCC BAA-98 / CGA009).